The chain runs to 695 residues: ATP-dependent zinc metalloprotease FTSH 2, chloroplastic (695 aa).

Residues 1–47 (MAASSACLVGNGLSVNTTTKQRLSKHFSGRQTSFSSVIRTSKVNVVK) constitute a chloroplast transit peptide. The transit peptide at 48 to 82 (ASLDGKKKQEGRRDFLKILLGNAGVGLVASGKANA) directs the protein to the thylakoid. Residues 83–167 (DEQGVSSSRM…AHNAQEDQGS (85 aa)) are Lumenal, thylakoid-facing. A helical transmembrane segment spans residues 168–188 (VLFNLIGNLAFPALLIGGLFL). The Stromal portion of the chain corresponds to 189–695 (LSRRSGGGMG…PASAPTPAAV (507 aa)). 267–274 (GPPGTGKT) serves as a coordination point for ATP. His-488 contacts Zn(2+). Glu-489 is a catalytic residue. 2 residues coordinate Zn(2+): His-492 and Asp-566. A disordered region spans residues 673 to 695 (PPENRVPSSTTTTPASAPTPAAV). Positions 679–695 (PSSTTTTPASAPTPAAV) are enriched in low complexity.

It in the N-terminal section; belongs to the AAA ATPase family. In the C-terminal section; belongs to the peptidase M41 family. In terms of assembly, interacts with CHIP and FTSH5. Heterohexamers with FTSH1, FTSH5 and FTSH8. May also form homooligomers. Zn(2+) serves as cofactor. In terms of processing, the FTSH2 precursor is ubiquitinated by CHIP in the cytoplasm. As to expression, expressed in cotyledons, cauline and rosette leaves, stems, sepals, flovers and siliques. Very low in roots.

It is found in the plastid. The protein resides in the chloroplast thylakoid membrane. Its function is as follows. Part of a complex that function as an ATP-dependent zinc metallopeptidase. Involved in the thylakoid formation and in the removal of damaged D1 in the photosystem II, preventing cell death under high-intensity light conditions, but not involved in thermotolerance. This chain is ATP-dependent zinc metalloprotease FTSH 2, chloroplastic (FTSH2), found in Arabidopsis thaliana (Mouse-ear cress).